The following is a 364-amino-acid chain: Chorismate synthase (364 aa).

NADP(+) is bound at residue arginine 48. Residues 125-127 (RSS), 237-238 (NA), glycine 277, 292-296 (KPTSS), and arginine 318 each bind FMN.

It belongs to the chorismate synthase family. As to quaternary structure, homotetramer. FMNH2 is required as a cofactor.

The enzyme catalyses 5-O-(1-carboxyvinyl)-3-phosphoshikimate = chorismate + phosphate. Its pathway is metabolic intermediate biosynthesis; chorismate biosynthesis; chorismate from D-erythrose 4-phosphate and phosphoenolpyruvate: step 7/7. In terms of biological role, catalyzes the anti-1,4-elimination of the C-3 phosphate and the C-6 proR hydrogen from 5-enolpyruvylshikimate-3-phosphate (EPSP) to yield chorismate, which is the branch point compound that serves as the starting substrate for the three terminal pathways of aromatic amino acid biosynthesis. This reaction introduces a second double bond into the aromatic ring system. This Albidiferax ferrireducens (strain ATCC BAA-621 / DSM 15236 / T118) (Rhodoferax ferrireducens) protein is Chorismate synthase.